We begin with the raw amino-acid sequence, 260 residues long: 3'-5' ssDNA/RNA exonuclease TatD (260 aa).

Residues E92, H128, and H153 each coordinate a divalent metal cation.

This sequence belongs to the metallo-dependent hydrolases superfamily. TatD-type hydrolase family. TatD subfamily. Monomer. The cofactor is Mg(2+).

The protein localises to the cytoplasm. Its function is as follows. 3'-5' exonuclease that prefers single-stranded DNA and RNA. May play a role in the H(2)O(2)-induced DNA damage repair. The chain is 3'-5' ssDNA/RNA exonuclease TatD from Pantoea vagans (strain C9-1) (Pantoea agglomerans (strain C9-1)).